A 423-amino-acid polypeptide reads, in one-letter code: Lysosomal acid phosphatase (423 aa).

Positions 1–30 (MAGRQSGWSQAALLQFLLGMCLMVMPPIQA) are cleaved as a signal peptide. Over 31 to 380 (RSLRFVTLLY…QLASDTADTE (350 aa)) the chain is Lumenal. The Nucleophile role is filled by His42. N-linked (GlcNAc...) asparagine glycans are attached at residues Asn92, Asn133, Asn167, Asn177, Asn191, Asn197, and Asn267. Disulfide bonds link Cys159/Cys370, Cys212/Cys310, and Cys345/Cys349. Asp287 serves as the catalytic Proton donor. N-linked (GlcNAc...) asparagine glycans are attached at residues Asn322 and Asn331. Residues 381-401 (VIVALAVCGSILFLLIVLLLT) traverse the membrane as a helical segment. Residues 402–423 (VLFRMQAQPPGYHHVADREDHA) lie on the Cytoplasmic side of the membrane.

The protein belongs to the histidine acid phosphatase family. In terms of processing, the membrane-bound form is converted to the soluble form by sequential proteolytic processing. First, the C-terminal cytoplasmic tail is removed. Cleavage by a lysosomal protease releases the soluble form in the lysosome lumen.

The protein resides in the lysosome membrane. Its subcellular location is the lysosome lumen. It catalyses the reaction a phosphate monoester + H2O = an alcohol + phosphate. In Rattus norvegicus (Rat), this protein is Lysosomal acid phosphatase (Acp2).